The chain runs to 1310 residues: Contactin-associated protein-like 4 (1310 aa).

The first 27 residues, 1–27 (MNMGSVAGAVLKMLLLLSTQNWNRVEA), serve as a signal peptide directing secretion. Residues 28–1243 (GNSYDCDEPL…LTHAIKSDSA (1216 aa)) lie on the Extracellular side of the membrane. The F5/8 type C domain maps to 33–179 (CDEPLVSALP…IGMRIEVFGC (147 aa)). Cys33 and Cys179 are disulfide-bonded. Residues 214 to 346 (FKTMESDGIL…NLFYNGVDVI (133 aa)) enclose the Laminin G-like 1 domain. N-linked (GlcNAc...) asparagine glycosylation is found at Asn262, Asn287, and Asn361. 4 cysteine pairs are disulfide-bonded: Cys334–Cys366, Cys517–Cys549, Cys555–Cys566, and Cys560–Cys575. Residues 400–529 (FRTWNKAGLL…LISINNKMVD (130 aa)) form the Laminin G-like 2 domain. A glycan (N-linked (GlcNAc...) asparagine) is linked at Asn540. The region spanning 551 to 588 (ISDRCLPNSCEHGGECSQSWSTFHCNCTNTGYTGATCH) is the EGF-like 1 domain. A glycan (N-linked (GlcNAc...) asparagine) is linked at Asn576. Cysteines 577 and 587 form a disulfide. A Fibrinogen C-terminal domain is found at 589 to 794 (SSVYEQSCEA…LLCRGDRPFW (206 aa)). N-linked (GlcNAc...) asparagine glycans are attached at residues Asn604, Asn627, Asn639, Asn708, and Asn750. The Laminin G-like 3 domain occupies 795 to 960 (NAASFNTEAS…TVTPGVQPGC (166 aa)). 4 disulfides stabilise this stretch: Cys933/Cys960, Cys964/Cys977, Cys971/Cys986, and Cys988/Cys998. The EGF-like 2 domain maps to 960–999 (CRGHCGSYGKLCRHGGKCREKPSGFFCDCSSSAYAGPFCS). Asn1019, Asn1025, and Asn1075 each carry an N-linked (GlcNAc...) asparagine glycan. The Laminin G-like 4 domain maps to 1048–1204 (FRTTRAPSLL…VTGHVTESSC (157 aa)). The cysteines at positions 1169 and 1204 are disulfide-linked. A helical membrane pass occupies residues 1244–1264 (VIGGLIAVVIFILLCVSAIAV). The Cytoplasmic segment spans residues 1265–1310 (RIYQQKRLYKRNEAKRSENVDSAEAVLKSELHIQNAVGENQKEYFF).

The protein belongs to the neurexin family. As to quaternary structure, interacts with TIAM1. In terms of tissue distribution, specifically present in developing cortical interneurons: highly expressed in cortical parvalbumin (PV) cells and midbrain dopaminergic neurons and is localized presynaptically (at protein level). Also present in the substantia nigra pars compacta (SnC) and ventral tegmental area (VTA) midbrain dopaminergic projection populations.

The protein resides in the presynaptic cell membrane. Functionally, presynaptic protein involved in both dopaminergic synaptic transmission and GABAergic system, thereby participating in the structural maturation of inhibitory interneuron synapses. Involved in the dopaminergic synaptic transmission by attenuating dopamine release through a presynaptic mechanism. Also participates in the GABAergic system. The polypeptide is Contactin-associated protein-like 4 (Cntnap4) (Mus musculus (Mouse)).